The primary structure comprises 114 residues: Biofilm growth-associated repressor (114 aa).

The 95-residue stretch at 17 to 111 (DMEKRANEVA…ALYTIFCTQE (95 aa)) folds into the HTH arsR-type domain. Residues 51–74 (VGELEQQIGIGQPTLSQQLGVLRE) constitute a DNA-binding region (H-T-H motif).

Represses an operon that probably comprises itself, PD_1892, PD_1893, PD_1894 and blh. Binds to a palindromic AT-rich sequence spanning the -10 region of the blh promoter and blocks transcription of the operon. This is Biofilm growth-associated repressor (bigR) from Xylella fastidiosa (strain Temecula1 / ATCC 700964).